The chain runs to 293 residues: 4-hydroxy-tetrahydrodipicolinate synthase (293 aa).

Threonine 44 contributes to the pyruvate binding site. Residue tyrosine 132 is the Proton donor/acceptor of the active site. Lysine 161 (schiff-base intermediate with substrate) is an active-site residue. Residue isoleucine 205 participates in pyruvate binding.

This sequence belongs to the DapA family. As to quaternary structure, homotetramer; dimer of dimers.

Its subcellular location is the cytoplasm. The enzyme catalyses L-aspartate 4-semialdehyde + pyruvate = (2S,4S)-4-hydroxy-2,3,4,5-tetrahydrodipicolinate + H2O + H(+). It functions in the pathway amino-acid biosynthesis; L-lysine biosynthesis via DAP pathway; (S)-tetrahydrodipicolinate from L-aspartate: step 3/4. Its function is as follows. Catalyzes the condensation of (S)-aspartate-beta-semialdehyde [(S)-ASA] and pyruvate to 4-hydroxy-tetrahydrodipicolinate (HTPA). The polypeptide is 4-hydroxy-tetrahydrodipicolinate synthase (Thermosipho africanus (strain TCF52B)).